A 332-amino-acid polypeptide reads, in one-letter code: Probable L-asparaginase (332 aa).

The region spanning 6-332 (PTIALLATGG…AKIQEMFEEY (327 aa)) is the Asparaginase/glutaminase domain. The O-isoaspartyl threonine intermediate role is filled by Thr16. Residues Ser62 and 95 to 96 (TD) each bind substrate.

The protein belongs to the asparaginase 1 family.

Its subcellular location is the cytoplasm. It catalyses the reaction L-asparagine + H2O = L-aspartate + NH4(+). In Helicobacter pylori (strain J99 / ATCC 700824) (Campylobacter pylori J99), this protein is Probable L-asparaginase (ansA).